The chain runs to 361 residues: Phenylalanine--tRNA ligase alpha subunit (361 aa).

A Mg(2+)-binding site is contributed by Glu-260.

Belongs to the class-II aminoacyl-tRNA synthetase family. Phe-tRNA synthetase alpha subunit type 1 subfamily. In terms of assembly, tetramer of two alpha and two beta subunits. Mg(2+) is required as a cofactor.

Its subcellular location is the cytoplasm. The catalysed reaction is tRNA(Phe) + L-phenylalanine + ATP = L-phenylalanyl-tRNA(Phe) + AMP + diphosphate + H(+). The sequence is that of Phenylalanine--tRNA ligase alpha subunit from Chelativorans sp. (strain BNC1).